Reading from the N-terminus, the 322-residue chain is Methionyl-tRNA formyltransferase (322 aa).

113-116 contacts (6S)-5,6,7,8-tetrahydrofolate; that stretch reads SLLP.

Belongs to the Fmt family.

It carries out the reaction L-methionyl-tRNA(fMet) + (6R)-10-formyltetrahydrofolate = N-formyl-L-methionyl-tRNA(fMet) + (6S)-5,6,7,8-tetrahydrofolate + H(+). In terms of biological role, attaches a formyl group to the free amino group of methionyl-tRNA(fMet). The formyl group appears to play a dual role in the initiator identity of N-formylmethionyl-tRNA by promoting its recognition by IF2 and preventing the misappropriation of this tRNA by the elongation apparatus. In Blochmanniella pennsylvanica (strain BPEN), this protein is Methionyl-tRNA formyltransferase.